Consider the following 701-residue polypeptide: A-type ATP synthase subunit I (701 aa).

10 helical membrane passes run 340–360 (WEIS…GLMF), 363–379 (FGNA…FYRY), 388–408 (IPKL…TGLL), 435–455 (LYNL…LLPF), 468–488 (MIFS…LGVI), 498–518 (FLFL…FIFM), 555–575 (GIVW…AILV), 583–603 (WGSA…LLLL), 612–632 (VLVF…MAYL), and 649–669 (IIIL…VVFI).

This sequence belongs to the V-ATPase 116 kDa subunit family. In terms of assembly, has multiple subunits with at least A(3), B(3), C, D, E, F, H, I and proteolipid K(x).

It is found in the cell membrane. Functionally, component of the A-type ATP synthase that produces ATP from ADP in the presence of a proton gradient across the membrane. The protein is A-type ATP synthase subunit I of Saccharolobus solfataricus (strain ATCC 35092 / DSM 1617 / JCM 11322 / P2) (Sulfolobus solfataricus).